The sequence spans 465 residues: Biotin biosynthesis bifunctional protein BioCD (465 aa).

Residues 1-254 (MTPFLPDRSI…AYGQWRKPRG (254 aa)) form a malonyl-ACP O-methyltransferase region. ATP is bound by residues aspartate 234 and 263–268 (GVGKTL). The segment at 255-465 (VFVTGTDTGV…DSLLSSNASR (211 aa)) is DTB synthetase. Threonine 267 lines the Mg(2+) pocket. Lysine 283 is a catalytic residue. Position 287 (threonine 287) interacts with substrate. ATP contacts are provided by residues aspartate 295, 351–354 (EGAG), and 435–437 (PQL). Aspartate 295 and glutamate 351 together coordinate Mg(2+).

This sequence in the N-terminal section; belongs to the methyltransferase superfamily. The protein in the C-terminal section; belongs to the dethiobiotin synthetase family. Mg(2+) serves as cofactor.

It is found in the cytoplasm. The catalysed reaction is (7R,8S)-7,8-diammoniononanoate + CO2 + ATP = (4R,5S)-dethiobiotin + ADP + phosphate + 3 H(+). It catalyses the reaction malonyl-[ACP] + S-adenosyl-L-methionine = malonyl-[ACP] methyl ester + S-adenosyl-L-homocysteine. It functions in the pathway cofactor biosynthesis; biotin biosynthesis; biotin from 7,8-diaminononanoate: step 1/2. It participates in cofactor biosynthesis; biotin biosynthesis. Its function is as follows. Converts the free carboxyl group of a malonyl-thioester to its methyl ester by transfer of a methyl group from S-adenosyl-L-methionine (SAM). It allows synthesis of pimeloyl-ACP via the fatty acid synthetic pathway. In terms of biological role, catalyzes a mechanistically unusual reaction, the ATP-dependent insertion of CO2 between the N7 and N8 nitrogen atoms of 7,8-diaminopelargonic acid (DAPA, also called 7,8-diammoniononanoate) to form a ureido ring. The polypeptide is Biotin biosynthesis bifunctional protein BioCD (Bordetella avium (strain 197N)).